A 426-amino-acid chain; its full sequence is MHDIRLIRDNPHAFDAGLARRGLAPLSAEILAADAELRALQTDIQAALARRNEASKLIGQAMAAGDKDKAEALKAEVAALKAALPAREEAERAQLAALHDRLAALPNLPADDVPDGEDEAGNVELSRWGTPRSFDFTPLEHADFAPALGLDFETAAKMSGARFAFLKGPMARLERALGQFMLDRQTIEAGYTECATPLLVRDDAAFGTTQLPKFREDLFQTTDGLWLISTSEMSLTNAVREQILAEADLPIRMTALTPCFRSEAGSAGRDTRGYIRQHQFWKVELVSITRPEDSDAELERKTRAAESILEALELPYRKMLLCAGDMGFAARKTYDLEVWLPGQNAYREISSCSNCGDFQARRMNARFRREGGKGNEFVHTLNGSGLAVGRTLVAILENYQQADGSVDIPAALLPYMGGITRLTPLG.

An L-serine-binding site is contributed by 230 to 232 (TSE). Position 261–263 (261–263 (RSE)) interacts with ATP. An L-serine-binding site is contributed by E284. 348 to 351 (EISS) contributes to the ATP binding site. Residue S384 participates in L-serine binding.

It belongs to the class-II aminoacyl-tRNA synthetase family. Type-1 seryl-tRNA synthetase subfamily. Homodimer. The tRNA molecule binds across the dimer.

It is found in the cytoplasm. It carries out the reaction tRNA(Ser) + L-serine + ATP = L-seryl-tRNA(Ser) + AMP + diphosphate + H(+). It catalyses the reaction tRNA(Sec) + L-serine + ATP = L-seryl-tRNA(Sec) + AMP + diphosphate + H(+). The protein operates within aminoacyl-tRNA biosynthesis; selenocysteinyl-tRNA(Sec) biosynthesis; L-seryl-tRNA(Sec) from L-serine and tRNA(Sec): step 1/1. Functionally, catalyzes the attachment of serine to tRNA(Ser). Is also able to aminoacylate tRNA(Sec) with serine, to form the misacylated tRNA L-seryl-tRNA(Sec), which will be further converted into selenocysteinyl-tRNA(Sec). The chain is Serine--tRNA ligase from Sphingopyxis alaskensis (strain DSM 13593 / LMG 18877 / RB2256) (Sphingomonas alaskensis).